A 157-amino-acid polypeptide reads, in one-letter code: Transcription elongation factor GreA (157 aa).

Residues 46–73 adopt a coiled-coil conformation; that stretch reads AEYHSARERQSFIEGRIAELEEIISAAE.

This sequence belongs to the GreA/GreB family.

Functionally, necessary for efficient RNA polymerase transcription elongation past template-encoded arresting sites. The arresting sites in DNA have the property of trapping a certain fraction of elongating RNA polymerases that pass through, resulting in locked ternary complexes. Cleavage of the nascent transcript by cleavage factors such as GreA or GreB allows the resumption of elongation from the new 3'terminus. GreA releases sequences of 2 to 3 nucleotides. The sequence is that of Transcription elongation factor GreA from Acidiphilium cryptum (strain JF-5).